We begin with the raw amino-acid sequence, 477 residues long: Bifunctional enzyme PyrF/PyrE (477 aa).

The interval Met1–Ser273 is OMP decarboxylase. Lys96 (proton donor) is an active-site residue. The orotate phosphoribosyltransferase stretch occupies residues Val274–Glu477. 5-phospho-alpha-D-ribose 1-diphosphate contacts are provided by residues Arg374, Lys375, Lys378, His380, and Asp400 to Ser408.

This sequence in the N-terminal section; belongs to the OMP decarboxylase family. Type 2 subfamily. It in the C-terminal section; belongs to the purine/pyrimidine phosphoribosyltransferase family. Mg(2+) is required as a cofactor.

It catalyses the reaction orotidine 5'-phosphate + H(+) = UMP + CO2. It carries out the reaction orotidine 5'-phosphate + diphosphate = orotate + 5-phospho-alpha-D-ribose 1-diphosphate. Its pathway is pyrimidine metabolism; UMP biosynthesis via de novo pathway; UMP from orotate: step 1/2. It participates in pyrimidine metabolism; UMP biosynthesis via de novo pathway; UMP from orotate: step 2/2. Functionally, catalyzes the transfer of a ribosyl phosphate group from 5-phosphoribose 1-diphosphate to orotate, leading to the formation of orotidine monophosphate (OMP). In terms of biological role, catalyzes the decarboxylation of orotidine monophosphate (OMP) to uridine monophosphate (UMP). The chain is Bifunctional enzyme PyrF/PyrE (pyrFE) from Nostoc sp. (strain PCC 7120 / SAG 25.82 / UTEX 2576).